The following is a 63-amino-acid chain: Venom peptide 2b (63 aa).

Positions 1 to 22 (MRGTSFILFAVVVILGFLHGNA) are cleaved as a signal peptide. AXPX repeat units follow at residues 22 to 25 (AEPL), 26 to 29 (ANPE), 32 to 35 (ANPD), 38 to 41 (ANPD), and 44 to 47 (ANPE). Positions 23–48 (EPLANPEPSANPDPLANPDPLANPEA) are excised as a propeptide. Leucine amide is present on Leu-62.

This sequence belongs to the MCD family. Mastoparan subfamily. As to expression, expressed by the venom gland.

The protein localises to the secreted. Its subcellular location is the target cell membrane. Antimicrobial peptide with strong and moderate activity against the fungi B.cinerea (MIC=5 uM) and C.albicans (MIC=100 uM), the Gram-negative bacterium E.coli (MIC=200 uM) and the Gram-positive bacterium S.aureus (MIC=25 uM). Shows cytolytic activity against insect cell lines. Has potent hemolytic activity against human erythrocytes (EC(50)=64 uM). In vivo, peptide injection in the vicinity of the head and thorax of lepidopteran larvae induces feeding disorder followed by death due to starvation. The polypeptide is Venom peptide 2b (Eumenes pomiformis (Potter wasp)).